The following is a 128-amino-acid chain: Secreted RxLR effector protein 57 (128 aa).

The N-terminal stretch at 1 to 31 is a signal peptide; it reads MHRKRLRVVLSATLLDLITCVQLMLDPLVRS. The RxLR signature appears at 58-61; it reads RILR.

The protein belongs to the RxLR effector family.

It is found in the secreted. It localises to the host nucleus. The protein localises to the host cytoplasm. In terms of biological role, secreted effector that completely suppresses the host cell death induced by cell death-inducing proteins. The polypeptide is Secreted RxLR effector protein 57 (Plasmopara viticola (Downy mildew of grapevine)).